Reading from the N-terminus, the 501-residue chain is Glutathione gamma-glutamylcysteinyltransferase 1 (501 aa).

One can recognise a Peptidase C83 domain in the interval 1-221 (MAMAGLYRRL…GFMLISRPHR (221 aa)). Active-site residues include Cys-56, His-162, and Asp-180.

It belongs to the phytochelatin synthase family. Expressed in roots, nodules and leaves.

It carries out the reaction [Glu(-Cys)](n)-Gly + glutathione + H(+) = [Glu(-Cys)](n+1)-Gly + glycine. With respect to regulation, requires cadmium for activity. Also activated in vitro by Zn(2+), Cu(2+), Fe(2+) or Fe(3+) ions, but not by Co(2+) or Ni(2+) ions. Its function is as follows. Involved in the synthesis of phytochelatins (PC) and homophytochelatins (hPC), the heavy-metal-binding peptides of plants. The polypeptide is Glutathione gamma-glutamylcysteinyltransferase 1 (PCS1) (Lotus japonicus (Lotus corniculatus var. japonicus)).